A 376-amino-acid chain; its full sequence is Cinnamyl alcohol dehydrogenase 2 (376 aa).

Cys44 contacts Zn(2+). An NADP(+)-binding site is contributed by Ser46. Residues His66, Glu67, Cys97, Cys100, Cys103, Cys111, and Cys161 each contribute to the Zn(2+) site. NADP(+) contacts are provided by residues Thr165, 187–192, 210–215, Thr250, Gly274, and 297–299; these read GLGGLG, SRSSEK, and SQI.

The protein belongs to the zinc-containing alcohol dehydrogenase family. As to quaternary structure, homodimer. The cofactor is Zn(2+). As to expression, expressed at the base of the stems.

The catalysed reaction is (E)-cinnamyl alcohol + NADP(+) = (E)-cinnamaldehyde + NADPH + H(+). It carries out the reaction (E)-coniferol + NADP(+) = (E)-coniferaldehyde + NADPH + H(+). It catalyses the reaction (E)-sinapyl alcohol + NADP(+) = (E)-sinapaldehyde + NADPH + H(+). The enzyme catalyses (E)-4-coumaroyl alcohol + NADP(+) = (E)-4-coumaraldehyde + NADPH + H(+). The catalysed reaction is (E)-caffeyl alcohol + NADP(+) = (E)-caffeyl aldehyde + NADPH + H(+). It participates in aromatic compound metabolism; phenylpropanoid biosynthesis. Functionally, involved in lignin biosynthesis. Catalyzes the final step specific for the production of lignin monomers. Catalyzes the NADPH-dependent reduction of coniferaldehyde, 5-hydroxyconiferaldehyde, sinapaldehyde, 4-coumaraldehyde and caffeyl aldehyde to their respective alcohols. This chain is Cinnamyl alcohol dehydrogenase 2, found in Arabidopsis thaliana (Mouse-ear cress).